Consider the following 429-residue polypeptide: BURP domain-containing protein 3 (429 aa).

Residues M1–A21 form the signal peptide. The disordered stretch occupies residues G59–G81. The BURP domain maps to F213–S428.

As to expression, expressed in stems, leaves, shoot, panicles and stamen.

This chain is BURP domain-containing protein 3 (BURP3), found in Oryza sativa subsp. japonica (Rice).